The chain runs to 264 residues: Glycerol uptake facilitator protein (264 aa).

At 1–3 (MDK) the chain is on the cytoplasmic side. The helical transmembrane segment at 4-32 (SLKANCIGEFLGTALLIFFGVGCVAALKV) threads the bilayer. The Periplasmic segment spans residues 33–37 (AGASF). Residues 38–58 (GLWEISIMWGMGVALAVYATA) form a helical membrane-spanning segment. At 59-61 (GLS) the chain is on the cytoplasmic side. Residues 62-65 (GAHL) lie within the membrane without spanning it. The NPA 1 signature appears at 66-68 (NPA). Residues 66–76 (NPAVTIALWKF) constitute an intramembrane region (helical). Residues 77–82 (ACFDGK) are Cytoplasmic-facing. The helical transmembrane segment at 83–106 (KVIPYIISQMLGAFFAAALVYALY) threads the bilayer. Over 107 to 141 (RNVFIDYETVHNIVRGTQESLSLAGTFSTYPHPSL) the chain is Periplasmic. The helical transmembrane segment at 142–167 (SIGGAFAVEFVITAILMALIMALTDD) threads the bilayer. Residues 168 to 175 (GNGVPRGP) are Cytoplasmic-facing. Residues 176–192 (LAPLLIGILIAVIGGAM) form a helical membrane-spanning segment. The Periplasmic portion of the chain corresponds to 193 to 196 (GPLT). Residues 197–200 (GFAM) lie within the membrane without spanning it. The short motif at 201–203 (NPA) is the NPA 2 element. An intramembrane region (helical) is located at residues 201–214 (NPARDFGPKFFAYL). The Periplasmic portion of the chain corresponds to 215 to 229 (AGWGELALTGGREIP). A helical membrane pass occupies residues 230 to 252 (YFIVPMVAPVLGALAGAWLYKKA). Residues 253–264 (IGGNLPCNCGCE) are Cytoplasmic-facing.

Belongs to the MIP/aquaporin (TC 1.A.8) family.

The protein resides in the cell inner membrane. It catalyses the reaction glycerol(in) = glycerol(out). Its function is as follows. Mediates glycerol diffusion across the cytoplasmic membrane via a pore-type mechanism. The polypeptide is Glycerol uptake facilitator protein (glpF) (Haemophilus influenzae (strain ATCC 51907 / DSM 11121 / KW20 / Rd)).